The following is a 314-amino-acid chain: Galectin-12 (314 aa).

Galectin domains are found at residues 27–161 (YGTT…VGFL) and 190–314 (CSRA…CVHC).

It is found in the nucleus. In terms of biological role, binds lactose. May participate in the apoptosis of adipocytes. This is Galectin-12 (Lgals12) from Mus musculus (Mouse).